A 459-amino-acid polypeptide reads, in one-letter code: Argininosuccinate lyase (459 aa).

Belongs to the lyase 1 family. Argininosuccinate lyase subfamily.

It is found in the cytoplasm. The catalysed reaction is 2-(N(omega)-L-arginino)succinate = fumarate + L-arginine. Its pathway is amino-acid biosynthesis; L-arginine biosynthesis; L-arginine from L-ornithine and carbamoyl phosphate: step 3/3. The sequence is that of Argininosuccinate lyase from Staphylococcus saprophyticus subsp. saprophyticus (strain ATCC 15305 / DSM 20229 / NCIMB 8711 / NCTC 7292 / S-41).